The sequence spans 510 residues: Glycerol kinase (510 aa).

ADP is bound at residue Thr-13. ATP is bound by residues Thr-13 and Thr-14. Thr-13 is a binding site for sn-glycerol 3-phosphate. Arg-17 lines the ADP pocket. Sn-glycerol 3-phosphate contacts are provided by Arg-83, Glu-84, Tyr-135, and Asp-255. Residues Arg-83, Glu-84, Tyr-135, Asp-255, and Gln-256 each coordinate glycerol. 4 residues coordinate ADP: Thr-277, Gly-321, Gly-421, and Asn-425. Thr-277, Gly-321, and Gly-421 together coordinate ATP.

The protein belongs to the FGGY kinase family.

The catalysed reaction is glycerol + ATP = sn-glycerol 3-phosphate + ADP + H(+). Its pathway is polyol metabolism; glycerol degradation via glycerol kinase pathway; sn-glycerol 3-phosphate from glycerol: step 1/1. Its function is as follows. Key enzyme in the regulation of glycerol uptake and metabolism. Catalyzes the phosphorylation of glycerol to yield sn-glycerol 3-phosphate. This Haloquadratum walsbyi (strain DSM 16790 / HBSQ001) protein is Glycerol kinase.